A 352-amino-acid polypeptide reads, in one-letter code: Molybdenum import ATP-binding protein ModC (352 aa).

The ABC transporter domain occupies 1-229 (MLELNFSQTL…SVMNPWLPKE (229 aa)). 31 to 38 (GVSGAGKT) serves as a coordination point for ATP. The Mop domain occupies 289–352 (QTSIRNVLRA…AQIKSVSITA (64 aa)).

Belongs to the ABC transporter superfamily. Molybdate importer (TC 3.A.1.8) family. As to quaternary structure, the complex is composed of two ATP-binding proteins (ModC), two transmembrane proteins (ModB) and a solute-binding protein (ModA).

The protein localises to the cell inner membrane. It carries out the reaction molybdate(out) + ATP + H2O = molybdate(in) + ADP + phosphate + H(+). Functionally, part of the ABC transporter complex ModABC involved in molybdenum import. Responsible for energy coupling to the transport system. This is Molybdenum import ATP-binding protein ModC from Shigella dysenteriae serotype 1 (strain Sd197).